The chain runs to 256 residues: Fumarate reductase iron-sulfur subunit (256 aa).

The region spanning 7 to 97 (MNVEVLRYNP…HMRIEPLANF (91 aa)) is the 2Fe-2S ferredoxin-type domain. Tyr14 contacts a menaquinone. Residues Cys58, Cys63, Cys66, and Cys78 each contribute to the [2Fe-2S] cluster site. The region spanning 151–180 (LEKYRQFSMCINCGLCYAACPQFGLNPEFL) is the 4Fe-4S ferredoxin-type domain. Positions 160, 163, and 166 each coordinate [4Fe-4S] cluster. Residues Cys170, Cys216, and Cys222 each contribute to the [3Fe-4S] cluster site. [4Fe-4S] cluster is bound at residue Cys226. Residue 237–240 (NQGK) coordinates a menaquinone.

This sequence belongs to the succinate dehydrogenase/fumarate reductase iron-sulfur protein family. As to quaternary structure, fumarate dehydrogenase forms part of an enzyme complex containing four subunits: a flavoprotein, an iron-sulfur, and two hydrophobic anchor proteins. Requires [2Fe-2S] cluster as cofactor. It depends on [3Fe-4S] cluster as a cofactor. [4Fe-4S] cluster is required as a cofactor.

It is found in the cell inner membrane. The catalysed reaction is a quinone + succinate = fumarate + a quinol. It carries out the reaction a menaquinone + succinate = a menaquinol + fumarate. This Haemophilus influenzae (strain ATCC 51907 / DSM 11121 / KW20 / Rd) protein is Fumarate reductase iron-sulfur subunit (frdB).